Consider the following 354-residue polypeptide: Probable N-acetylmuramoyl-L-alanine amidase (354 aa).

Residues 1–39 (MVKVINNFVKVNQYDRPGLKLAAVKGIVMHWTATPGASA) form the signal peptide. In terms of domain architecture, N-acetylmuramoyl-L-alanine amidase spans 40–152 (LNERNYFNGT…YDVTNKGCPT (113 aa)).

The protein belongs to the N-acetylmuramoyl-L-alanine amidase 2 family.

It is found in the secreted. It catalyses the reaction Hydrolyzes the link between N-acetylmuramoyl residues and L-amino acid residues in certain cell-wall glycopeptides.. The chain is Probable N-acetylmuramoyl-L-alanine amidase from Bacillus licheniformis.